The following is a 391-amino-acid chain: Probable malate dehydrogenase 1 (391 aa).

68 to 74 (GAAGQIA) is an NAD(+) binding site. Positions 149 and 155 each coordinate substrate. NAD(+) is bound by residues Asn162, Gln169, and 186-188 (VGN). Residues Asn188 and Arg219 each contribute to the substrate site. His244 functions as the Proton acceptor in the catalytic mechanism.

The protein belongs to the LDH/MDH superfamily. MDH type 2 family. Homodimer.

The catalysed reaction is (S)-malate + NAD(+) = oxaloacetate + NADH + H(+). Catalyzes the reversible oxidation of malate to oxaloacetate. The polypeptide is Probable malate dehydrogenase 1 (mdhA) (Dictyostelium discoideum (Social amoeba)).